We begin with the raw amino-acid sequence, 276 residues long: NH(3)-dependent NAD(+) synthetase (276 aa).

43–50 contacts ATP; that stretch reads GISGGVDS. Asp-49 lines the Mg(2+) pocket. Arg-146 provides a ligand contact to deamido-NAD(+). Thr-166 lines the ATP pocket. Glu-171 serves as a coordination point for Mg(2+). Deamido-NAD(+) contacts are provided by Lys-179 and Asp-186. Residues Lys-195 and Thr-217 each contribute to the ATP site. 266–267 contacts deamido-NAD(+); it reads HK.

This sequence belongs to the NAD synthetase family. As to quaternary structure, homodimer.

The enzyme catalyses deamido-NAD(+) + NH4(+) + ATP = AMP + diphosphate + NAD(+) + H(+). It participates in cofactor biosynthesis; NAD(+) biosynthesis; NAD(+) from deamido-NAD(+) (ammonia route): step 1/1. Functionally, catalyzes the ATP-dependent amidation of deamido-NAD to form NAD. Uses ammonia as a nitrogen source. This is NH(3)-dependent NAD(+) synthetase from Vibrio campbellii (strain ATCC BAA-1116).